Reading from the N-terminus, the 61-residue chain is Conotoxin LiC32 (61 aa).

An N-terminal signal peptide occupies residues 1-22; sequence MRCVPVFIILLLLSPSAPSVDA. A propeptide spanning residues 23–44 is cleaved from the precursor; sequence HPKTKDDVPLASFHDDAKRTLQ. At cysteine 60 the chain carries Cysteine amide.

Belongs to the conotoxin T superfamily. In terms of processing, contains 2 disulfide bonds that can be either 'C1-C3, C2-C4' or 'C1-C4, C2-C3', since these disulfide connectivities have been observed for conotoxins with cysteine framework V (for examples, see AC P0DQQ7 and AC P81755). In terms of tissue distribution, expressed by the venom duct.

It localises to the secreted. Has the ability to interact with the G-protein coupled somatostatin type 3 receptor (SSTR3). The ability was measured in competition binding experiments and the constant of inhibition (Ki) has been evaluated to be 3.5 uM. In Conus lividus (Livid cone), this protein is Conotoxin LiC32.